A 197-amino-acid polypeptide reads, in one-letter code: Protein RmlC homolog (197 aa).

Histidine 76 serves as the catalytic Proton acceptor. The active-site Proton donor is the tyrosine 140.

In terms of biological role, could catalyze a 3,5-epimerization. The chain is Protein RmlC homolog (rfbC) from Streptococcus pyogenes serotype M6 (strain ATCC BAA-946 / MGAS10394).